Consider the following 699-residue polypeptide: Polyribonucleotide nucleotidyltransferase (699 aa).

The Mg(2+) site is built by Asp-485 and Asp-491. The KH domain occupies 552 to 611 (PRITVIKINPEKIRDVIGKGGAVIRALTEETGTTIELEDDGTVKIASSNGEATKEAIRRI). The region spanning 621-689 (GRIYNGKVIR…RQGRVRLSIK (69 aa)) is the S1 motif domain.

Belongs to the polyribonucleotide nucleotidyltransferase family. As to quaternary structure, component of the RNA degradosome, which is a multiprotein complex involved in RNA processing and mRNA degradation. Mg(2+) serves as cofactor.

It is found in the cytoplasm. It catalyses the reaction RNA(n+1) + phosphate = RNA(n) + a ribonucleoside 5'-diphosphate. In terms of biological role, involved in mRNA degradation. Catalyzes the phosphorolysis of single-stranded polyribonucleotides processively in the 3'- to 5'-direction. This chain is Polyribonucleotide nucleotidyltransferase, found in Shewanella baltica (strain OS223).